We begin with the raw amino-acid sequence, 199 residues long: Recombination protein RecR (199 aa).

Residues 57-72 (CSICFNLTDTDPCAIC) form a C4-type zinc finger. The Toprim domain maps to 80–175 (RLLMVVEEAK…KVTRIAHGLP (96 aa)).

This sequence belongs to the RecR family.

Its function is as follows. May play a role in DNA repair. It seems to be involved in an RecBC-independent recombinational process of DNA repair. It may act with RecF and RecO. This Carboxydothermus hydrogenoformans (strain ATCC BAA-161 / DSM 6008 / Z-2901) protein is Recombination protein RecR.